A 55-amino-acid chain; its full sequence is Large ribosomal subunit protein bL33 (55 aa).

Belongs to the bacterial ribosomal protein bL33 family.

In Roseobacter denitrificans (strain ATCC 33942 / OCh 114) (Erythrobacter sp. (strain OCh 114)), this protein is Large ribosomal subunit protein bL33.